We begin with the raw amino-acid sequence, 155 residues long: MPRFIEGKLDATGLKFGIIVGRFNSFIGERLLEGALDALVRNGADEATIDVARVPGAFEIPLTAKKMAQTGSYDAIICLGAVIRGSTPHFDYVAAEVSKGVAHVSLETGVPVSFGVLTTDTIEQAVERAGTKAGNKGFDAAMTAIETVRVFREFR.

Residues Phe23, 57-59 (AFE), and 81-83 (AVI) contribute to the 5-amino-6-(D-ribitylamino)uracil site. Residue 86–87 (ST) coordinates (2S)-2-hydroxy-3-oxobutyl phosphate. His89 (proton donor) is an active-site residue. Phe114 lines the 5-amino-6-(D-ribitylamino)uracil pocket. (2S)-2-hydroxy-3-oxobutyl phosphate is bound at residue Arg128.

Belongs to the DMRL synthase family.

It catalyses the reaction (2S)-2-hydroxy-3-oxobutyl phosphate + 5-amino-6-(D-ribitylamino)uracil = 6,7-dimethyl-8-(1-D-ribityl)lumazine + phosphate + 2 H2O + H(+). It functions in the pathway cofactor biosynthesis; riboflavin biosynthesis; riboflavin from 2-hydroxy-3-oxobutyl phosphate and 5-amino-6-(D-ribitylamino)uracil: step 1/2. Its function is as follows. Catalyzes the formation of 6,7-dimethyl-8-ribityllumazine by condensation of 5-amino-6-(D-ribitylamino)uracil with 3,4-dihydroxy-2-butanone 4-phosphate. This is the penultimate step in the biosynthesis of riboflavin. The chain is 6,7-dimethyl-8-ribityllumazine synthase from Geobacter metallireducens (strain ATCC 53774 / DSM 7210 / GS-15).